The chain runs to 283 residues: Tropomyosin (283 aa).

Residues 1–283 (MDAIKKKMQA…LDSAFVELIL (283 aa)) adopt a coiled-coil conformation.

It belongs to the tropomyosin family. As to quaternary structure, homodimer.

In terms of biological role, tropomyosin, in association with the troponin complex, plays a central role in the calcium dependent regulation of muscle contraction. This chain is Tropomyosin, found in Locusta migratoria (Migratory locust).